A 128-amino-acid chain; its full sequence is Calcitonin gene-related peptide 1 (128 aa).

The N-terminal stretch at Met-1–Ala-25 is a signal peptide. A propeptide spanning residues Val-26 to Gln-80 is cleaved from the precursor. An intrachain disulfide couples Cys-84 to Cys-89. Phenylalanine amide is present on Phe-119. The propeptide occupies Asp-125–Ala-128.

Belongs to the calcitonin family. In terms of tissue distribution, detected in nerve cells of cerebrum, hippocampus and pons/midbrain in newborns, and only in nerve cells of pons/midbrain in adult.

It is found in the secreted. Its function is as follows. CGRP1/CALCA is a peptide hormone that induces vasodilation mediated by the CALCRL-RAMP1 receptor complex. Dilates a variety of vessels including the coronary, cerebral and systemic vasculature. Its abundance in the CNS also points toward a neurotransmitter or neuromodulator role. It also elevates platelet cAMP. CGRP1 can also bind and activate CALCR-RAMP1 (AMYR1) receptor complex. In Mus musculus (Mouse), this protein is Calcitonin gene-related peptide 1.